We begin with the raw amino-acid sequence, 459 residues long: FBD-associated F-box protein At4g13985 (459 aa).

The region spanning 18 to 64 is the F-box domain; sequence VDRLRNLPDCLLFKILLNLPTKDVVKLSVLSRRWRNVWRYVPGLDLE. An FBD domain is found at 375–429; that stretch reads KEGANILPGPRRFLTSLEYVKIAKPMAAEASEIKLKLVSYFLENSTILKKLTLCL.

In Arabidopsis thaliana (Mouse-ear cress), this protein is FBD-associated F-box protein At4g13985.